Reading from the N-terminus, the 359-residue chain is Aminomethyltransferase (359 aa).

This sequence belongs to the GcvT family. The glycine cleavage system is composed of four proteins: P, T, L and H.

The catalysed reaction is N(6)-[(R)-S(8)-aminomethyldihydrolipoyl]-L-lysyl-[protein] + (6S)-5,6,7,8-tetrahydrofolate = N(6)-[(R)-dihydrolipoyl]-L-lysyl-[protein] + (6R)-5,10-methylene-5,6,7,8-tetrahydrofolate + NH4(+). Its function is as follows. The glycine cleavage system catalyzes the degradation of glycine. This Idiomarina loihiensis (strain ATCC BAA-735 / DSM 15497 / L2-TR) protein is Aminomethyltransferase.